We begin with the raw amino-acid sequence, 170 residues long: Large ribosomal subunit protein uL18c (170 aa).

A chloroplast-targeting transit peptide spans 1 to 63 (MLASPALAGA…QADRIARHVR (63 aa)).

This sequence belongs to the universal ribosomal protein uL18 family. As to quaternary structure, part of the 50S ribosomal subunit; contacts the 5S rRNA.

It is found in the plastid. The protein localises to the chloroplast. In terms of biological role, binds 5S rRNA, forms part of the central protuberance of the 50S subunit. This is Large ribosomal subunit protein uL18c (RPL18) from Oryza sativa subsp. japonica (Rice).